A 331-amino-acid chain; its full sequence is L-lactate dehydrogenase A chain (331 aa).

NAD(+)-binding positions include 29-57 (GMVGMASAISILLKDLCDELAMVDVMEDK) and R98. Substrate is bound by residues R105, N137, and R168. NAD(+) is bound at residue N137. H192 functions as the Proton acceptor in the catalytic mechanism. T247 is a substrate binding site.

This sequence belongs to the LDH/MDH superfamily. LDH family. In terms of assembly, homotetramer.

It localises to the cytoplasm. It carries out the reaction (S)-lactate + NAD(+) = pyruvate + NADH + H(+). It participates in fermentation; pyruvate fermentation to lactate; (S)-lactate from pyruvate: step 1/1. Its function is as follows. Interconverts simultaneously and stereospecifically pyruvate and lactate with concomitant interconversion of NADH and NAD(+). The chain is L-lactate dehydrogenase A chain (ldha) from Notothenia angustata (Rockcod).